The sequence spans 122 residues: MFSLQHVLLILISLGQVYSQQVHHNAGRKFPQWLTGLIAMTVFLFLVLVVYVAKMFWDKRSQESINMKDIEEVVANGTSECCEARKENQYISCNMKDLRSSEHIHAYENPIEVNDNVRSTAM.

The chain crosses the membrane as a helical span at residues 33 to 53 (WLTGLIAMTVFLFLVLVVYVA).

It belongs to the PDZK1-interacting protein 1/SMIM24 family. As to expression, expressed in prospective pronephric mesoderm at the late gastrula stage. After neurulation, expressed in the intermediate mesoderm, eye placode and blood islands. Expression becomes restricted to the pronephric proximal tubule during embryogenesis, but is absent from the connecting tubules.

Its subcellular location is the membrane. In terms of biological role, essential for pronephric tubule development, acting upstream of pax8 and lhx1/lim1 and downstream of retinoic acid signaling to induce pronephric mesoderm to form pronephric tubule-specific cells. The chain is Proximal tubules-expressed gene protein (pteg) from Xenopus laevis (African clawed frog).